The sequence spans 710 residues: Tudor domain-containing protein 3 (710 aa).

Disordered stretches follow at residues 206–227 (KTFGGGGNAGSNLNPGAGGSRN), 288–328 (LTGN…SAPS), and 369–515 (KDYN…SEFY). Positions 250-290 (LVDEKALRHITEMGFSKDAARQALMDHSNNVEAALNSLLTG) constitute a UBA domain. Composition is skewed to basic and acidic residues over residues 370-400 (DYNHKDYNQPRQFTRNDTRAPRNEKPPRFQK) and 431-451 (MEERNKCERGYPRNDRLKDFS). Polar residues predominate over residues 453 to 471 (LPSSHQNEGSYKKSYTNPM). 2 stretches are compositionally biased toward basic and acidic residues: residues 480–490 (NHTEVKEEFHH) and 504–515 (KKDDQRYNSEFY). Positions 617-677 (SWRPGDECLA…RPIQAEAWEE (61 aa)) constitute a Tudor domain. The tract at residues 678–710 (EGDFGDFRRGGDGQPRRSTRPTQQFYQPPRARN) is disordered. Residues 682–692 (GDFRRGGDGQP) are compositionally biased toward basic and acidic residues.

In terms of assembly, component of mRNA stress granules.

Its subcellular location is the cytoplasm. It is found in the nucleus. Its function is as follows. Scaffolding protein that specifically recognizes and binds dimethylarginine-containing proteins. Plays a role in the regulation of translation of target mRNAs by binding Arg/Gly-rich motifs (GAR) in dimethylarginine-containing proteins. In nucleus, acts as a coactivator: recognizes and binds asymmetric dimethylation on the core histone tails associated with transcriptional activation (H3R17me2a and H4R3me2a) and recruits proteins at these arginine-methylated loci. In cytoplasm, acts as an antiviral factor that participates in the assembly of stress granules together with G3BP1. This is Tudor domain-containing protein 3 (tdrd3) from Xenopus tropicalis (Western clawed frog).